An 85-amino-acid polypeptide reads, in one-letter code: uncharacterized protein (85 aa).

This is an uncharacterized protein from Gallid herpesvirus 2 (strain Chicken/Md5/ATCC VR-987) (GaHV-2).